The chain runs to 317 residues: MTTALDQLKQYTTVVADTGDFQQLAQYKPQDATTNPSLILKAVQKDAYRPILEKTVRDHAGESAGFIIDRLLIAFGTEILKLIPGRVSTEVDARLSFDTQRSIDKGREIIKLYEAAGVGRERVLIKLASTWEGIRAAEVLQREGIRCNMTLLFSLVQAAACAEAGAQLISPFVGRIYDWYKKQKGADWDEAQDGGANDPGVQSVRRIYTYYKHFGYRTEVMGASFRTTSQITELAGCDLLTISPELLQKLHDSTEAVARKLSPDEARDARLERVAIDESSFRFQLNDDAMATEKLAEGIRLFSADAVKLEKMIEALR.

The active-site Schiff-base intermediate with substrate is the lysine 126.

The protein belongs to the transaldolase family. Type 1 subfamily. As to quaternary structure, homodimer.

The protein resides in the cytoplasm. It carries out the reaction D-sedoheptulose 7-phosphate + D-glyceraldehyde 3-phosphate = D-erythrose 4-phosphate + beta-D-fructose 6-phosphate. It functions in the pathway carbohydrate degradation; pentose phosphate pathway; D-glyceraldehyde 3-phosphate and beta-D-fructose 6-phosphate from D-ribose 5-phosphate and D-xylulose 5-phosphate (non-oxidative stage): step 2/3. Transaldolase is important for the balance of metabolites in the pentose-phosphate pathway. This is Transaldolase from Burkholderia pseudomallei (strain 1710b).